A 134-amino-acid polypeptide reads, in one-letter code: Histone H2A (134 aa).

Positions 1 to 10 (MTGGKSGGKA) are enriched in gly residues. Residues 1–26 (MTGGKSGGKASGSKSSAQSRSSKAGL) are disordered. An N6-acetyllysine mark is found at Lys-5 and Lys-9. Residues 11 to 25 (SGSKSSAQSRSSKAG) show a composition bias toward low complexity. Residue Gln-107 is modified to N5-methylglutamine. Position 131 is a phosphoserine (Ser-131). The short motif at 131-132 (SQ) is the [ST]-Q motif element.

The protein belongs to the histone H2A family. The nucleosome is a histone octamer containing two molecules each of H2A, H2B, H3 and H4 assembled in one H3-H4 heterotetramer and two H2A-H2B heterodimers. The octamer wraps approximately 147 bp of DNA. In terms of processing, phosphorylated to form H2AS128ph (gamma-H2A) in response to DNA double-strand breaks (DSBs) generated by exogenous genotoxic agents and by stalled replication forks. Phosphorylation is dependent on the DNA damage checkpoint kinases MEC1/ATR and TEL1/ATM, spreads on either side of a detected DSB site and may mark the surrounding chromatin for recruitment of proteins required for DNA damage signaling and repair. Gamma-H2A is removed from the DNA prior to the strand invasion-primer extension step of the repair process and subsequently dephosphorylated. Dephosphorylation is necessary for efficient recovery from the DNA damage checkpoint. Acetylated by ESA1 to form H2AK4ac and H2AK7ac.

It is found in the nucleus. The protein localises to the chromosome. Its function is as follows. Core component of nucleosome which plays a central role in DNA double strand break (DSB) repair. Nucleosomes wrap and compact DNA into chromatin, limiting DNA accessibility to the cellular machineries which require DNA as a template. Histones thereby play a central role in transcription regulation, DNA repair, DNA replication and chromosomal stability. DNA accessibility is regulated via a complex set of post-translational modifications of histones, also called histone code, and nucleosome remodeling. This chain is Histone H2A (HTA1), found in Phaeosphaeria nodorum (strain SN15 / ATCC MYA-4574 / FGSC 10173) (Glume blotch fungus).